Here is a 145-residue protein sequence, read N- to C-terminus: Protein BUD31 homolog 1 (145 aa).

This sequence belongs to the BUD31 (G10) family.

The protein resides in the nucleus. The sequence is that of Protein BUD31 homolog 1 from Oryza sativa subsp. japonica (Rice).